Reading from the N-terminus, the 161-residue chain is Peroxynitrite isomerase 2 (161 aa).

The GXWXGXG signature appears at 17 to 23 (GTWAGQG). Heme b is bound at residue His-152.

It belongs to the nitrobindin family. As to quaternary structure, homodimer. It depends on heme b as a cofactor.

The enzyme catalyses peroxynitrite = nitrate. Its pathway is nitrogen metabolism. In terms of biological role, heme-binding protein able to scavenge peroxynitrite and to protect free L-tyrosine against peroxynitrite-mediated nitration, by acting as a peroxynitrite isomerase that converts peroxynitrite to nitrate. Therefore, this protein likely plays a role in peroxynitrite sensing and in the detoxification of reactive nitrogen and oxygen species (RNS and ROS, respectively). Is able to bind nitric oxide (NO) in vitro, but may act as a sensor of peroxynitrite levels in vivo. The protein is Peroxynitrite isomerase 2 of Mycobacterium ulcerans (strain Agy99).